Consider the following 307-residue polypeptide: Protease HtpX homolog 1 (307 aa).

A run of 2 helical transmembrane segments spans residues 7–27 (LKTLMFLSGTLTIIAEGIITY) and 38–60 (IFTAIFLVILWLIQWLIAPYLVG). Histidine 133 is a binding site for Zn(2+). Glutamate 134 is an active-site residue. Histidine 137 contacts Zn(2+). Helical transmembrane passes span 145–165 (IGMALGLIPTIIGYVGNFLLF) and 180–200 (LILGLAMLAIGGVLFVLTFLL). Glutamate 212 serves as a coordination point for Zn(2+).

Belongs to the peptidase M48B family. Zn(2+) is required as a cofactor.

The protein resides in the cell membrane. The sequence is that of Protease HtpX homolog 1 from Sulfolobus acidocaldarius (strain ATCC 33909 / DSM 639 / JCM 8929 / NBRC 15157 / NCIMB 11770).